Consider the following 297-residue polypeptide: Protein AKTIP homolog (297 aa).

The interval 13–75 (FLSDLDEKSS…QRSPSGSSPE (63 aa)) is disordered. A compositionally biased stretch (basic and acidic residues) spans 17 to 42 (LDEKSSSSPHDEKKPGDGREVREEKS). Positions 59-75 (MNLSIARQRSPSGSSPE) are enriched in polar residues. In terms of domain architecture, UBC core spans 84 to 232 (FLEYTLMAEY…VNECLRRCHN (149 aa)).

Belongs to the ubiquitin-conjugating enzyme family. FTS subfamily.

This is Protein AKTIP homolog from Nematostella vectensis (Starlet sea anemone).